The following is a 219-amino-acid chain: C-type lectin domain family 4 member E (219 aa).

Residues 1–19 (MNSSKSSETQCTERGCFSS) lie on the Cytoplasmic side of the membrane. The helical; Signal-anchor for type II membrane protein transmembrane segment at 20 to 40 (QMFLWTVAGIPILFLSACFIT) threads the bilayer. At 41–219 (RCVVTFRIFQ…INPLNKGKSL (179 aa)) the chain is on the extracellular side. Residue Asn62 is glycosylated (N-linked (GlcNAc...) asparagine). Cys80 and Cys91 are disulfide-bonded. One can recognise a C-type lectin domain in the interval 87–206 (FQSSCYFFST…CFLNYFRICE (120 aa)). An N-linked (GlcNAc...) asparagine glycan is attached at Asn107. Intrachain disulfides connect Cys108–Cys205 and Cys179–Cys197. 8 residues coordinate Ca(2+): Val117, Asn119, Glu123, Glu169, Asn171, Asn193, Asp194, and Glu206. The Confers specificity for glucose/mannose-type carbohydrates motif lies at 169-171 (EPN).

In terms of assembly, monomer and homodimer. Interacts with signaling adapter Fc receptor gamma chain/FCER1G to form a functional complex; the interaction is direct. Alternatively, acts as a bridge for interaction between CLEC4D and FCER1G. A heterodimer of CLEC4E and CLEC4D associates with FCER1G to form a functional complex. Interacts with SAP130 nuclear protein that is released from necrotic cells; the interaction is direct. Expressed in monocytes and macrophages.

The protein resides in the cell membrane. The protein localises to the cell projection. It is found in the phagocytic cup. Its function is as follows. Calcium-dependent lectin that acts as a pattern recognition receptor (PRR) of the innate immune system: recognizes damage-associated molecular patterns (DAMPs) of abnormal self and pathogen-associated molecular patterns (PAMPs) of bacteria and fungi. The PAMPs notably include mycobacterial trehalose 6,6'-dimycolate (TDM), a cell wall glycolipid with potent adjuvant immunomodulatory functions. Interacts with signaling adapter Fc receptor gamma chain/FCER1G to form a functional complex in myeloid cells. Binding of mycobacterial trehalose 6,6'-dimycolate (TDM) to this receptor complex leads to phosphorylation of the immunoreceptor tyrosine-based activation motif (ITAM) of FCER1G, triggering activation of SYK, CARD9 and NF-kappa-B, consequently driving maturation of antigen-presenting cells and shaping antigen-specific priming of T-cells toward effector T-helper 1 and T-helper 17 cell subtypes. Also recognizes alpha-mannose residues on pathogenic fungi of the genus Malassezia and mediates macrophage activation. Through recognition of DAMPs released upon nonhomeostatic cell death, enables immune sensing of damaged self and promotes inflammatory cell infiltration into the damaged tissue. In Homo sapiens (Human), this protein is C-type lectin domain family 4 member E.